Reading from the N-terminus, the 457-residue chain is tRNA-2-methylthio-N(6)-dimethylallyladenosine synthase (457 aa).

Positions 3–120 (KKVYIKTFGC…LPQMIDQRRA (118 aa)) constitute an MTTase N-terminal domain. The [4Fe-4S] cluster site is built by C12, C49, C83, C157, C161, and C164. Positions 143-377 (RVEGPSAFVS…QATIEENVAR (235 aa)) constitute a Radical SAM core domain. Residues 380–447 (RSMVGKVERI…PHSLRGELLL (68 aa)) form the TRAM domain.

It belongs to the methylthiotransferase family. MiaB subfamily. Monomer. Requires [4Fe-4S] cluster as cofactor.

Its subcellular location is the cytoplasm. The catalysed reaction is N(6)-dimethylallyladenosine(37) in tRNA + (sulfur carrier)-SH + AH2 + 2 S-adenosyl-L-methionine = 2-methylsulfanyl-N(6)-dimethylallyladenosine(37) in tRNA + (sulfur carrier)-H + 5'-deoxyadenosine + L-methionine + A + S-adenosyl-L-homocysteine + 2 H(+). In terms of biological role, catalyzes the methylthiolation of N6-(dimethylallyl)adenosine (i(6)A), leading to the formation of 2-methylthio-N6-(dimethylallyl)adenosine (ms(2)i(6)A) at position 37 in tRNAs that read codons beginning with uridine. The polypeptide is tRNA-2-methylthio-N(6)-dimethylallyladenosine synthase (Burkholderia ambifaria (strain MC40-6)).